A 664-amino-acid chain; its full sequence is UvrABC system protein B (664 aa).

Residues 23 to 180 (EGLNRGMRFQ…EKLAKIGYQR (158 aa)) form the Helicase ATP-binding domain. An ATP-binding site is contributed by 36-43 (GVTGSGKT). The short motif at 89–112 (YYDYYQPEAYIPTKDLYIEKNADI) is the Beta-hairpin element. The region spanning 426–588 (QVDDLINEIV…ITPRSIVKPL (163 aa)) is the Helicase C-terminal domain. A UVR domain is found at 622–657 (EEYVALLEEEMYRAASELRYEDAAALRDELFRVKET).

This sequence belongs to the UvrB family. Forms a heterotetramer with UvrA during the search for lesions. Interacts with UvrC in an incision complex.

Its subcellular location is the cytoplasm. Its function is as follows. The UvrABC repair system catalyzes the recognition and processing of DNA lesions. A damage recognition complex composed of 2 UvrA and 2 UvrB subunits scans DNA for abnormalities. Upon binding of the UvrA(2)B(2) complex to a putative damaged site, the DNA wraps around one UvrB monomer. DNA wrap is dependent on ATP binding by UvrB and probably causes local melting of the DNA helix, facilitating insertion of UvrB beta-hairpin between the DNA strands. Then UvrB probes one DNA strand for the presence of a lesion. If a lesion is found the UvrA subunits dissociate and the UvrB-DNA preincision complex is formed. This complex is subsequently bound by UvrC and the second UvrB is released. If no lesion is found, the DNA wraps around the other UvrB subunit that will check the other stand for damage. The protein is UvrABC system protein B of Thermotoga neapolitana (strain ATCC 49049 / DSM 4359 / NBRC 107923 / NS-E).